Reading from the N-terminus, the 518-residue chain is Cytochrome P450 1A1 (518 aa).

Residues 33-44 are mitochondrial targeting signal; that stretch reads SKPRVPKGLKRL. The O-linked (GlcNAc) serine glycan is linked to Ser-71. Phe-228 is a binding site for substrate. Cys-461 lines the heme pocket.

This sequence belongs to the cytochrome P450 family. In terms of assembly, interacts with cytosolic chaperones HSP70 and HSP90; this interaction is required for initial targeting to mitochondria. Interacts (via mitochondrial targeting signal) with TOMM40 (via N-terminus); this interaction is required for translocation across the mitochondrial outer membrane. The cofactor is heme.

It localises to the endoplasmic reticulum membrane. It is found in the mitochondrion inner membrane. The protein resides in the microsome membrane. Its subcellular location is the cytoplasm. It catalyses the reaction an organic molecule + reduced [NADPH--hemoprotein reductase] + O2 = an alcohol + oxidized [NADPH--hemoprotein reductase] + H2O + H(+). It carries out the reaction estrone + reduced [NADPH--hemoprotein reductase] + O2 = 2-hydroxyestrone + oxidized [NADPH--hemoprotein reductase] + H2O + H(+). The enzyme catalyses estrone + reduced [NADPH--hemoprotein reductase] + O2 = 4-hydroxyestrone + oxidized [NADPH--hemoprotein reductase] + H2O + H(+). The catalysed reaction is estrone + reduced [NADPH--hemoprotein reductase] + O2 = 6alpha-hydroxyestrone + oxidized [NADPH--hemoprotein reductase] + H2O + H(+). It catalyses the reaction estrone + reduced [NADPH--hemoprotein reductase] + O2 = 15alpha-hydroxyestrone + oxidized [NADPH--hemoprotein reductase] + H2O + H(+). It carries out the reaction estrone + reduced [NADPH--hemoprotein reductase] + O2 = 16alpha-hydroxyestrone + oxidized [NADPH--hemoprotein reductase] + H2O + H(+). The enzyme catalyses 17beta-estradiol + reduced [NADPH--hemoprotein reductase] + O2 = 2-hydroxy-17beta-estradiol + oxidized [NADPH--hemoprotein reductase] + H2O + H(+). The catalysed reaction is 17beta-estradiol + reduced [NADPH--hemoprotein reductase] + O2 = 4-hydroxy-17beta-estradiol + oxidized [NADPH--hemoprotein reductase] + H2O + H(+). It catalyses the reaction 17beta-estradiol + reduced [NADPH--hemoprotein reductase] + O2 = 6alpha-hydroxy-17beta-estradiol + oxidized [NADPH--hemoprotein reductase] + H2O + H(+). It carries out the reaction 17beta-estradiol + reduced [NADPH--hemoprotein reductase] + O2 = 7alpha-hydroxy-17beta-estradiol + oxidized [NADPH--hemoprotein reductase] + H2O + H(+). The enzyme catalyses 17beta-estradiol + reduced [NADPH--hemoprotein reductase] + O2 = 15alpha-hydroxy-17beta-estradiol + oxidized [NADPH--hemoprotein reductase] + H2O + H(+). The catalysed reaction is (5Z,8Z,11Z)-eicosatrienoate + reduced [NADPH--hemoprotein reductase] + O2 = 19-hydroxy-(5Z,8Z,11Z)-eicosatrienoate + oxidized [NADPH--hemoprotein reductase] + H2O + H(+). It catalyses the reaction (5Z,8Z,11Z,14Z)-eicosatetraenoate + reduced [NADPH--hemoprotein reductase] + O2 = 16-hydroxy-(5Z,8Z,11Z,14Z)-eicosatetraenoate + oxidized [NADPH--hemoprotein reductase] + H2O + H(+). It carries out the reaction (5Z,8Z,11Z,14Z)-eicosatetraenoate + reduced [NADPH--hemoprotein reductase] + O2 = 17-hydroxy-(5Z,8Z,11Z,14Z)-eicosatetraenoate + oxidized [NADPH--hemoprotein reductase] + H2O + H(+). The enzyme catalyses (5Z,8Z,11Z,14Z)-eicosatetraenoate + reduced [NADPH--hemoprotein reductase] + O2 = 18-hydroxy-(5Z,8Z,11Z,14Z)-eicosatetraenoate + oxidized [NADPH--hemoprotein reductase] + H2O + H(+). The catalysed reaction is (5Z,8Z,11Z,14Z)-eicosatetraenoate + reduced [NADPH--hemoprotein reductase] + O2 = 19-hydroxy-(5Z,8Z,11Z,14Z)-eicosatetraenoate + oxidized [NADPH--hemoprotein reductase] + H2O + H(+). It catalyses the reaction (5Z,8Z,11Z,14Z,17Z)-eicosapentaenoate + reduced [NADPH--hemoprotein reductase] + O2 = 19-hydroxy-(5Z,8Z,11Z,14Z,17Z)-eicosapentaenoate + oxidized [NADPH--hemoprotein reductase] + H2O + H(+). It carries out the reaction (5Z,8Z,11Z,14Z)-eicosatetraenoate + reduced [NADPH--hemoprotein reductase] + O2 = (8R,9S)-epoxy-(5Z,11Z,14Z)-eicosatrienoate + oxidized [NADPH--hemoprotein reductase] + H2O + H(+). The enzyme catalyses (5Z,8Z,11Z,14Z)-eicosatetraenoate + reduced [NADPH--hemoprotein reductase] + O2 = (11R,12S)-epoxy-(5Z,8Z,14Z)-eicosatrienoate + oxidized [NADPH--hemoprotein reductase] + H2O + H(+). The catalysed reaction is (5Z,8Z,11Z,14Z)-eicosatetraenoate + reduced [NADPH--hemoprotein reductase] + O2 = (14S,15R)-epoxy-(5Z,8Z,11Z)-eicosatrienoate + oxidized [NADPH--hemoprotein reductase] + H2O + H(+). It catalyses the reaction (5Z,8Z,11Z,14Z)-eicosatetraenoate + reduced [NADPH--hemoprotein reductase] + O2 = (14R,15S)-epoxy-(5Z,8Z,11Z)-eicosatrienoate + oxidized [NADPH--hemoprotein reductase] + H2O + H(+). It carries out the reaction (5Z,8Z,11Z,14Z,17Z)-eicosapentaenoate + reduced [NADPH--hemoprotein reductase] + O2 = (17R,18S)-epoxy-(5Z,8Z,11Z,14Z)-eicosatetraenoate + oxidized [NADPH--hemoprotein reductase] + H2O + H(+). The enzyme catalyses (4Z,7Z,10Z,13Z,16Z,19Z)-docosahexaenoate + reduced [NADPH--hemoprotein reductase] + O2 = (19S,20R)-epoxy-(4Z,7Z,10Z,13Z,16Z)-docosapentaenoate + oxidized [NADPH--hemoprotein reductase] + H2O + H(+). The catalysed reaction is (4Z,7Z,10Z,13Z,16Z,19Z)-docosahexaenoate + reduced [NADPH--hemoprotein reductase] + O2 = (19R,20S)-epoxy-(4Z,7Z,10Z,13Z,16Z)-docosapentaenoate + oxidized [NADPH--hemoprotein reductase] + H2O + H(+). It catalyses the reaction all-trans-retinol + reduced [NADPH--hemoprotein reductase] + O2 = all-trans-retinal + oxidized [NADPH--hemoprotein reductase] + 2 H2O + H(+). It carries out the reaction all-trans-retinal + reduced [NADPH--hemoprotein reductase] + O2 = all-trans-retinoate + oxidized [NADPH--hemoprotein reductase] + H2O + 2 H(+). The enzyme catalyses (13S)-hydroperoxy-(9Z,11E)-octadecadienoate = 13-oxo-(9Z,11E)-octadecadienoate + H2O. The catalysed reaction is (12S)-hydroperoxy-(5Z,8Z,10E,14Z)-eicosatetraenoate = 12-oxo-(5Z,8Z,10E,14Z)-eicosatetraenoate + H2O. It catalyses the reaction (15S)-hydroperoxy-(5Z,8Z,11Z,13E)-eicosatetraenoate = 15-oxo-(5Z,8Z,11Z,13E)-eicosatetraenoate + H2O. It carries out the reaction (5S)-hydroperoxy-(6E,8Z,11Z,14Z)-eicosatetraenoate = 5-oxo-(6E,8Z,11Z,14Z)-eicosatetraenoate + H2O. The protein operates within steroid hormone biosynthesis. It functions in the pathway lipid metabolism; fatty acid metabolism. Its pathway is cofactor metabolism; retinol metabolism. A cytochrome P450 monooxygenase involved in the metabolism of various endogenous substrates, including fatty acids, steroid hormones and vitamins. Mechanistically, uses molecular oxygen inserting one oxygen atom into a substrate, and reducing the second into a water molecule, with two electrons provided by NADPH via cytochrome P450 reductase (CPR; NADPH-ferrihemoprotein reductase). Catalyzes the hydroxylation of carbon-hydrogen bonds. Exhibits high catalytic activity for the formation of hydroxyestrogens from estrone (E1) and 17beta-estradiol (E2), namely 2-hydroxy E1 and E2, as well as D-ring hydroxylated E1 and E2 at the C15alpha and C16alpha positions. Displays different regioselectivities for polyunsaturated fatty acids (PUFA) hydroxylation. Catalyzes the epoxidation of double bonds of certain PUFA. Converts arachidonic acid toward epoxyeicosatrienoic acid (EET) regioisomers, 8,9-, 11,12-, and 14,15-EET, that function as lipid mediators in the vascular system. Displays an absolute stereoselectivity in the epoxidation of eicosapentaenoic acid (EPA) producing the 17(R),18(S) enantiomer. May play an important role in all-trans retinoic acid biosynthesis in extrahepatic tissues. Catalyzes two successive oxidative transformation of all-trans retinol to all-trans retinal and then to the active form all-trans retinoic acid. May also participate in eicosanoids metabolism by converting hydroperoxide species into oxo metabolites (lipoxygenase-like reaction, NADPH-independent). This chain is Cytochrome P450 1A1 (CYP1A1), found in Oryctolagus cuniculus (Rabbit).